Here is a 146-residue protein sequence, read N- to C-terminus: Large ribosomal subunit protein uL14 (146 aa).

Belongs to the universal ribosomal protein uL14 family.

The protein is Large ribosomal subunit protein uL14 (RPL23) of Encephalitozoon cuniculi (strain GB-M1) (Microsporidian parasite).